A 38-amino-acid chain; its full sequence is Conotoxin r7a (38 aa).

Residues 1 to 5 (APAKR) constitute a propeptide that is removed on maturation. Tryptophan 6 is modified (6'-bromotryptophan). 4-carboxyglutamate occurs at positions 10 and 11. 3 disulfides stabilise this stretch: cysteine 12–cysteine 26, cysteine 19–cysteine 30, and cysteine 25–cysteine 35. Tryptophan 15 carries the post-translational modification 6'-bromotryptophan. Glutamate 20 and glutamate 31 each carry 4-carboxyglutamate. A 6'-bromotryptophan modification is found at tryptophan 38.

It belongs to the conotoxin O2 superfamily. Expressed by the venom duct.

Its subcellular location is the secreted. Functionally, induces a sleep-like state in mice. This is Conotoxin r7a from Conus radiatus (Rayed cone).